The primary structure comprises 303 residues: Recombination-associated protein RdgC (303 aa).

The protein belongs to the RdgC family.

Its subcellular location is the cytoplasm. It is found in the nucleoid. Functionally, may be involved in recombination. This chain is Recombination-associated protein RdgC, found in Shewanella sediminis (strain HAW-EB3).